A 493-amino-acid chain; its full sequence is MSFKDLRSFIDHLEKNGELKRISYPVDPHLEMTEIADRVLRSGGPALLFENPTNHTMPVLVNLFGTPKRVAMALGKDDPLALREVGELLAFLKEPEPPTGFKDAIAKIPMYKQALNMPPKTVRNPPCQQVVKTGDEVDLTSLPIQHCWPGDVAPLVTWGLTITKGPRQKRQNLGIYRQQLLSKNKLIMRWLDHRGGALDFKDFKQLHPGERYPVVVALGSDPVTILGAVTPVPDSMSEYAFAGLLRGERTEVCKAISCDLEVPATSEIILEGYIDPEETAVEGPYGDHTGYYNETDSFPVFTVTHITHRKDAIYHSTYTGRPPDEPAMLGVALNEVFVPILRKQYPEIIDFYLPPEGCSYRMAVISIRKQYPGHAKRVMMGAWSFLRQFMYTKFIVVVDDDVNCRDWQDVIWAITTRMDPIRDTMMVDNTPIDYLDFASPVAGLGSKMGLDATNKWPGETTREWGTPIVMDEKTKQRIDQIWDDLGIQDMPTL.

Asparagine 172 contributes to the Mn(2+) binding site. Prenylated FMN-binding positions include 175–177 (IYR), 189–191 (RWL), and 194–195 (RG). Glutamate 238 is a binding site for Mn(2+). The Proton donor role is filled by aspartate 287.

It belongs to the UbiD family. In terms of assembly, homohexamer. It depends on prenylated FMN as a cofactor. Mn(2+) is required as a cofactor.

It localises to the cell membrane. The enzyme catalyses a 4-hydroxy-3-(all-trans-polyprenyl)benzoate + H(+) = a 2-(all-trans-polyprenyl)phenol + CO2. Its pathway is cofactor biosynthesis; ubiquinone biosynthesis. Its function is as follows. Catalyzes the decarboxylation of 3-octaprenyl-4-hydroxy benzoate to 2-octaprenylphenol, an intermediate step in ubiquinone biosynthesis. The chain is 3-octaprenyl-4-hydroxybenzoate carboxy-lyase from Shewanella frigidimarina (strain NCIMB 400).